We begin with the raw amino-acid sequence, 97 residues long: Aspartyl/glutamyl-tRNA(Asn/Gln) amidotransferase subunit C (97 aa).

The protein belongs to the GatC family. Heterotrimer of A, B and C subunits.

The catalysed reaction is L-glutamyl-tRNA(Gln) + L-glutamine + ATP + H2O = L-glutaminyl-tRNA(Gln) + L-glutamate + ADP + phosphate + H(+). The enzyme catalyses L-aspartyl-tRNA(Asn) + L-glutamine + ATP + H2O = L-asparaginyl-tRNA(Asn) + L-glutamate + ADP + phosphate + 2 H(+). Functionally, allows the formation of correctly charged Asn-tRNA(Asn) or Gln-tRNA(Gln) through the transamidation of misacylated Asp-tRNA(Asn) or Glu-tRNA(Gln) in organisms which lack either or both of asparaginyl-tRNA or glutaminyl-tRNA synthetases. The reaction takes place in the presence of glutamine and ATP through an activated phospho-Asp-tRNA(Asn) or phospho-Glu-tRNA(Gln). The sequence is that of Aspartyl/glutamyl-tRNA(Asn/Gln) amidotransferase subunit C from Anaeromyxobacter sp. (strain K).